Consider the following 185-residue polypeptide: ATP synthase subunit b (185 aa).

Residues 27 to 47 (GALIWKGLNILAFLGIVYYFG) traverse the membrane as a helical segment.

It belongs to the ATPase B chain family. As to quaternary structure, F-type ATPases have 2 components, F(1) - the catalytic core - and F(0) - the membrane proton channel. F(1) has five subunits: alpha(3), beta(3), gamma(1), delta(1), epsilon(1). F(0) has three main subunits: a(1), b(2) and c(10-14). The alpha and beta chains form an alternating ring which encloses part of the gamma chain. F(1) is attached to F(0) by a central stalk formed by the gamma and epsilon chains, while a peripheral stalk is formed by the delta and b chains.

Its subcellular location is the cell inner membrane. In terms of biological role, f(1)F(0) ATP synthase produces ATP from ADP in the presence of a proton or sodium gradient. F-type ATPases consist of two structural domains, F(1) containing the extramembraneous catalytic core and F(0) containing the membrane proton channel, linked together by a central stalk and a peripheral stalk. During catalysis, ATP synthesis in the catalytic domain of F(1) is coupled via a rotary mechanism of the central stalk subunits to proton translocation. Its function is as follows. Component of the F(0) channel, it forms part of the peripheral stalk, linking F(1) to F(0). The polypeptide is ATP synthase subunit b (Aquifex aeolicus (strain VF5)).